A 144-amino-acid chain; its full sequence is Large ribosomal subunit protein uL11 (144 aa).

Belongs to the universal ribosomal protein uL11 family. In terms of assembly, part of the ribosomal stalk of the 50S ribosomal subunit. Interacts with L10 and the large rRNA to form the base of the stalk. L10 forms an elongated spine to which L12 dimers bind in a sequential fashion forming a multimeric L10(L12)X complex. One or more lysine residues are methylated.

Forms part of the ribosomal stalk which helps the ribosome interact with GTP-bound translation factors. The chain is Large ribosomal subunit protein uL11 from Acidiphilium cryptum (strain JF-5).